The sequence spans 289 residues: Melatonin receptor type 1B (289 aa).

The Cytoplasmic segment spans residues 1-2 (GN). Residues 3–23 (AFVVSLALADLVVALYPYPLV) traverse the membrane as a helical segment. The Extracellular segment spans residues 24 to 41 (LLAIFHNGWTLGEMHCKV). Cysteine 39 and cysteine 116 are joined by a disulfide. Residues 42-62 (SGFVMGLSVIGSIFNITAIAI) form a helical membrane-spanning segment. Topologically, residues 63 to 81 (NRYCYICHSFAYDKVYSCW) are cytoplasmic. Residues 82-102 (NTMLYVSLIWVLTVIATVPNF) form a helical membrane-spanning segment. Topologically, residues 103 to 126 (FVGSLKYDPRIYSCTFVQTASSYY) are extracellular. The chain crosses the membrane as a helical span at residues 127 to 147 (TIAVVVIHFIVPITVVSFCYL). Residues 148–179 (RIWVLVLQVRRRVKSETKPRLKPSDFRNFLTM) are Cytoplasmic-facing. Residues 180–200 (FVVFVIFAFCWAPLNFIGLAV) traverse the membrane as a helical segment. The Extracellular portion of the chain corresponds to 201–213 (AINPSEMAPKVPE). A helical membrane pass occupies residues 214–234 (WLFIISYFMAYFNSCLNAIIY). Over 235-289 (GLLNQNFRNEYKRILMSLWMPRLFFQDTSKGGTDGQKSKPSPALNNNDQMKTDTL) the chain is Cytoplasmic. Residues 264–289 (KGGTDGQKSKPSPALNNNDQMKTDTL) are disordered.

Belongs to the G-protein coupled receptor 1 family. As to expression, brain and kidney, with trace levels in lungs.

The protein localises to the cell membrane. In terms of biological role, high affinity receptor for melatonin. The activity of this receptor is mediated by pertussis toxin sensitive G proteins that inhibits adenylate cyclase activity. This chain is Melatonin receptor type 1B, found in Gallus gallus (Chicken).